Here is a 146-residue protein sequence, read N- to C-terminus: Large ribosomal subunit protein uL16 (146 aa).

The protein belongs to the universal ribosomal protein uL16 family. In terms of assembly, part of the 50S ribosomal subunit.

Its function is as follows. Binds 23S rRNA and is also seen to make contacts with the A and possibly P site tRNAs. The polypeptide is Large ribosomal subunit protein uL16 (Lactobacillus acidophilus (strain ATCC 700396 / NCK56 / N2 / NCFM)).